A 172-amino-acid chain; its full sequence is Adenylate kinase isoenzyme 6 (172 aa).

The ATP site is built by Gly13, Gly15, Lys16, Thr17, and Thr18. Positions 33 to 56 (NVGDLAREEQLYDGYDEEYDCPIL) are NMP. Residues 33–56 (NVGDLAREEQLYDGYDEEYDCPIL) form an NMPbind region. The interval 108 to 118 (TRGYNEKKLTD) is LID. Positions 109 and 148 each coordinate ATP.

This sequence belongs to the adenylate kinase family. AK6 subfamily. In terms of assembly, monomer and homodimer. Interacts with small ribosomal subunit protein uS11. Not a structural component of 43S pre-ribosomes, but transiently interacts with them by binding to uS11. Interacts with COIL (via C-terminus). In terms of tissue distribution, expressed in heart, brain, placenta, lung, liver, skeletal muscle, kidney, pancreas, chorionic villi and the central nervous system.

Its subcellular location is the cytoplasm. It is found in the nucleus. The protein localises to the nucleoplasm. It localises to the cajal body. The catalysed reaction is AMP + ATP = 2 ADP. The enzyme catalyses ATP + H2O = ADP + phosphate + H(+). Functionally, broad-specificity nucleoside monophosphate (NMP) kinase that catalyzes the reversible transfer of the terminal phosphate group between nucleoside triphosphates and monophosphates. Also has ATPase activity. Involved in the late cytoplasmic maturation steps of the 40S ribosomal particles, specifically 18S rRNA maturation. While NMP activity is not required for ribosome maturation, ATPase activity is. Associates transiently with small ribosomal subunit protein uS11. ATP hydrolysis breaks the interaction with uS11. May temporarily remove uS11 from the ribosome to enable a conformational change of the ribosomal RNA that is needed for the final maturation step of the small ribosomal subunit. Its NMP activity may have a role in nuclear energy homeostasis. AMP and dAMP are the preferred substrates, but CMP and dCMP are also good substrates. IMP is phosphorylated to a much lesser extent. All nucleoside triphosphates ATP, GTP, UTP, CTP, dATP, dCTP, dGTP, and TTP are accepted as phosphate donors. CTP is the best phosphate donor, followed by UTP, ATP, GTP and dCTP. May be involved in regulation of Cajal body (CB) formation. The polypeptide is Adenylate kinase isoenzyme 6 (Homo sapiens (Human)).